Reading from the N-terminus, the 101-residue chain is MAAEVKTVIKPLGDRVVVKRIEEEPKTKGGIVLPDTAKEKPQKGKVIAVGTGRVLENGQRVPLEVKEGDIVVFAKYGGTEIEIDGEEYVILSERDLLAVLQ.

It belongs to the GroES chaperonin family. As to quaternary structure, heptamer of 7 subunits arranged in a ring. Interacts with the chaperonin GroEL.

Its subcellular location is the cytoplasm. Together with the chaperonin GroEL, plays an essential role in assisting protein folding. The GroEL-GroES system forms a nano-cage that allows encapsulation of the non-native substrate proteins and provides a physical environment optimized to promote and accelerate protein folding. GroES binds to the apical surface of the GroEL ring, thereby capping the opening of the GroEL channel. The protein is Co-chaperonin GroES of Thermus thermophilus (strain ATCC BAA-163 / DSM 7039 / HB27).